The chain runs to 149 residues: Transcriptional repressor NrdR (149 aa).

A zinc finger lies at 3–34; sequence CPFCFAVDTKVIDSRLVGEGSSVRRRRQCLVC. One can recognise an ATP-cone domain in the interval 49-139; it reads PRVIKSNDVR…VYRSFEDIKD (91 aa).

This sequence belongs to the NrdR family. The cofactor is Zn(2+).

Functionally, negatively regulates transcription of bacterial ribonucleotide reductase nrd genes and operons by binding to NrdR-boxes. In Salmonella schwarzengrund (strain CVM19633), this protein is Transcriptional repressor NrdR.